The following is a 422-amino-acid chain: GPI mannosyltransferase 1 (422 aa).

8 helical membrane-spanning segments follow: residues threonine 10–tyrosine 30, phenylalanine 82–leucine 102, isoleucine 162–valine 182, leucine 216–isoleucine 236, isoleucine 282–leucine 302, serine 327–leucine 347, leucine 352–tyrosine 372, and glycine 385–isoleucine 405.

This sequence belongs to the PIGM family.

It is found in the endoplasmic reticulum membrane. Its pathway is glycolipid biosynthesis; glycosylphosphatidylinositol-anchor biosynthesis. In terms of biological role, mannosyltransferase involved in glycosylphosphatidylinositol-anchor biosynthesis. Transfers the first alpha-1,4-mannose to GlcN-acyl-PI during GPI precursor assembly. Required for cell wall integrity. The chain is GPI mannosyltransferase 1 (GPI14) from Gibberella zeae (strain ATCC MYA-4620 / CBS 123657 / FGSC 9075 / NRRL 31084 / PH-1) (Wheat head blight fungus).